A 234-amino-acid polypeptide reads, in one-letter code: Ponticulin-like protein J (234 aa).

The N-terminal stretch at 1–20 (MRLLNNLILMVVLFVAVSNA) is a signal peptide. 4 N-linked (GlcNAc...) asparagine glycosylation sites follow: Asn19, Asn143, Asn166, and Asn206. The segment at 115–213 (TIKCGTLPPD…SDNETAEGNN (99 aa)) is disordered. Residues 154 to 195 (KSTPKSPSTPKTNNSNEDSDLTTSSSDSSSSTKSSPKSKSST) show a composition bias toward low complexity. Residue Asn212 is the site of GPI-like-anchor amidated asparagine attachment. An N-linked (GlcNAc...) asparagine glycan is attached at Asn213. A propeptide spans 213–234 (NASSNIATFSLVIISLLVASLF) (removed in mature form).

This sequence belongs to the ponticulin family. Post-translationally, the GPI-like-anchor contains a phosphoceramide group, rather than a phosphatidyl group.

The protein resides in the cell membrane. Functionally, binds F-actin and nucleates actin assembly. The polypeptide is Ponticulin-like protein J (ponJ) (Dictyostelium discoideum (Social amoeba)).